We begin with the raw amino-acid sequence, 244 residues long: ATP synthase subunit a (244 aa).

Transmembrane regions (helical) follow at residues 17-37 (LTNI…AILT), 75-95 (FLAL…LGLP), 112-132 (DPAI…YYGV), 170-190 (LYGN…LATS), and 221-241 (GAIQ…HKIS).

This sequence belongs to the ATPase A chain family. F-type ATPases have 2 components, CF(1) - the catalytic core - and CF(0) - the membrane proton channel. CF(1) has five subunits: alpha(3), beta(3), gamma(1), delta(1), epsilon(1). CF(0) has three main subunits: a(1), b(2) and c(9-12). The alpha and beta chains form an alternating ring which encloses part of the gamma chain. CF(1) is attached to CF(0) by a central stalk formed by the gamma and epsilon chains, while a peripheral stalk is formed by the delta and b chains. The F(1)F(0) complex interacts with SpoIIIJ and YqjG; YqgA is found in the same complex.

It localises to the cell membrane. Key component of the proton channel; it plays a direct role in the translocation of protons across the membrane. The protein is ATP synthase subunit a of Bacillus subtilis (strain 168).